The following is a 123-amino-acid chain: Large ribosomal subunit protein uL24 (123 aa).

It belongs to the universal ribosomal protein uL24 family. As to quaternary structure, part of the 50S ribosomal subunit.

One of two assembly initiator proteins, it binds directly to the 5'-end of the 23S rRNA, where it nucleates assembly of the 50S subunit. In terms of biological role, located at the polypeptide exit tunnel on the outside of the subunit. The protein is Large ribosomal subunit protein uL24 of Pyrobaculum islandicum (strain DSM 4184 / JCM 9189 / GEO3).